The following is a 180-amino-acid chain: Putative adenylate kinase (180 aa).

Residues Gly-10, Gly-12, Lys-13, Thr-14, and Thr-15 each coordinate ATP. An NMP region spans residues 30–50; sequence NLRDFALEKGCGREVDGEVEV. Positions 99–109 are LID; sequence ERGYSKEKIGE. Arg-100 and Lys-138 together coordinate ATP.

The protein belongs to the adenylate kinase family. AK6 subfamily. In terms of assembly, interacts with uS11. Not a structural component of 40S pre-ribosomes, but transiently interacts with them by binding to uS11.

It carries out the reaction AMP + ATP = 2 ADP. The enzyme catalyses ATP + H2O = ADP + phosphate + H(+). Its function is as follows. Broad-specificity nucleoside monophosphate (NMP) kinase that catalyzes the reversible transfer of the terminal phosphate group between nucleoside triphosphates and monophosphates. Also has ATPase activity. Involved in the late maturation steps of the 30S ribosomal particles, specifically 16S rRNA maturation. While NMP activity is not required for ribosome maturation, ATPase activity is. Associates transiently with small ribosomal subunit protein uS11. ATP hydrolysis breaks the interaction with uS11. May temporarily remove uS11 from the ribosome to enable a conformational change of the ribosomal RNA that is needed for the final maturation step of the small ribosomal subunit. The polypeptide is Putative adenylate kinase (Pyrococcus abyssi (strain GE5 / Orsay)).